The sequence spans 455 residues: Protein 60A (455 aa).

Positions 1 to 36 (MSGLRNTSEAVAVLASLGLGMVLLMFVATTPPAVEA) are cleaved as a signal peptide. A propeptide spanning residues 37 to 335 (TQSGIYIDNG…SASHPRKRKK (299 aa)) is cleaved from the precursor. A compositionally biased stretch (acidic residues) spans 108–118 (GLSDQDEDDDY). Positions 108–138 (GLSDQDEDDDYERGHRSRRSADLEEDEGEQQ) are disordered. N-linked (GlcNAc...) asparagine glycosylation is found at Asn238 and Asn250. Positions 316–345 (AHSSHHRSKRSASHPRKRKKSVSPNNVPLL) are disordered. Residues 318–336 (SSHHRSKRSASHPRKRKKS) show a composition bias toward basic residues. Intrachain disulfides connect Cys354-Cys420, Cys383-Cys452, and Cys387-Cys454. Asn396 carries an N-linked (GlcNAc...) asparagine glycan.

The protein belongs to the TGF-beta family. Homodimer; disulfide-linked. Interacts with nord and dpp. In terms of tissue distribution, expressed in cells of the developing foregut and hindgut during germ band retraction and later embryonic stages. Expressed in the wing disk, mainly in the posterior compartment in the pteropleural and medial regions extending into the progenitors of the scutellum. High levels are found within the posterior and anterior compartments of the wing pouch and low levels in the hinge region. In the eye/antennal disk, expression is highest anterior to the morphogenetic furrow and in the medial regions with lower levels of expression posterior to the morphogenetic furrow. Expressed throughout the posterior compartment of the leg imaginal disks and within the ventral anterior compartment.

Its subcellular location is the secreted. Required for the growth of imaginal tissues and for patterning of the adult wing. This is Protein 60A (gbb) from Drosophila melanogaster (Fruit fly).